The chain runs to 523 residues: Acetyl-CoA hydrolase (523 aa).

A CoA-binding site is contributed by 277–281 (GIGNI). The active-site 5-glutamyl coenzyme A thioester intermediate is E302. CoA-binding residues include N392 and G396.

This sequence belongs to the acetyl-CoA hydrolase/transferase family.

Its subcellular location is the cytoplasm. The catalysed reaction is acetyl-CoA + H2O = acetate + CoA + H(+). Its function is as follows. Presumably involved in regulating the intracellular acetyl-CoA pool for fatty acid and cholesterol synthesis and fatty acid oxidation. In Kluyveromyces lactis (strain ATCC 8585 / CBS 2359 / DSM 70799 / NBRC 1267 / NRRL Y-1140 / WM37) (Yeast), this protein is Acetyl-CoA hydrolase (ACH1).